The chain runs to 632 residues: tRNA uridine 5-carboxymethylaminomethyl modification enzyme MnmG (632 aa).

FAD-binding positions include 15–20 (GAGHAG), valine 127, and serine 182. Residue 276 to 290 (GARYCPSIEDKIVRF) coordinates NAD(+). Glutamine 373 serves as a coordination point for FAD.

The protein belongs to the MnmG family. In terms of assembly, homodimer. Heterotetramer of two MnmE and two MnmG subunits. The cofactor is FAD.

Its subcellular location is the cytoplasm. NAD-binding protein involved in the addition of a carboxymethylaminomethyl (cmnm) group at the wobble position (U34) of certain tRNAs, forming tRNA-cmnm(5)s(2)U34. This is tRNA uridine 5-carboxymethylaminomethyl modification enzyme MnmG from Enterococcus faecalis (strain ATCC 700802 / V583).